A 38-amino-acid chain; its full sequence is Defensin (38 aa).

Intrachain disulfides connect Cys4-Cys26, Cys11-Cys34, and Cys15-Cys36.

It belongs to the invertebrate defensin family. Type 2 subfamily.

It localises to the secreted. Mediates the inducible antibacterial activity in larvae of A.cyanea. This is Defensin from Aeshna cyanea (Southern hawker dragonfly).